The chain runs to 155 residues: Small ribosomal subunit protein uS7c (155 aa).

It belongs to the universal ribosomal protein uS7 family. Part of the 30S ribosomal subunit.

The protein localises to the plastid. Its subcellular location is the chloroplast. Functionally, one of the primary rRNA binding proteins, it binds directly to 16S rRNA where it nucleates assembly of the head domain of the 30S subunit. The chain is Small ribosomal subunit protein uS7c (rps7) from Allium textile (Textile onion).